Here is a 285-residue protein sequence, read N- to C-terminus: Probable adenylate kinase 6, chloroplastic (285 aa).

The transit peptide at 1–33 (MAAISRAIRACAAAGSRRSMASSAKEVAAAGAR) directs the protein to the chloroplast. Residue 63-68 (GVGKGT) coordinates ATP. Residues 83 to 112 (ATGDLVRDALASPGPFSEQLAEIVNNGKLV) are NMP. AMP is bound by residues threonine 84, arginine 89, 110 to 112 (KLV), 140 to 143 (GFPR), and glutamine 147. The segment at 176 to 224 (GRRMCSQCGGNFNVASIDMEGENGGPRMYMPPLLPPPQCESKLITRPDD) is LID. ATP is bound by residues arginine 177 and 186–187 (NF). Positions 221 and 232 each coordinate AMP.

It belongs to the adenylate kinase family.

Its subcellular location is the plastid. The protein localises to the chloroplast. It catalyses the reaction AMP + ATP = 2 ADP. In terms of biological role, catalyzes the reversible transfer of the terminal phosphate group between ATP and AMP. Plays an important role in cellular energy homeostasis and in adenine nucleotide metabolism. This chain is Probable adenylate kinase 6, chloroplastic, found in Oryza sativa subsp. japonica (Rice).